We begin with the raw amino-acid sequence, 389 residues long: 26S proteasome regulatory subunit 10B (389 aa).

Lys72 carries the N6-acetyllysine modification. Gly174–Thr181 is a binding site for ATP. At Lys206 the chain carries N6-acetyllysine. At Ser244 the chain carries Phosphoserine.

It belongs to the AAA ATPase family. Component of the 19S proteasome regulatory particle complex. The 26S proteasome consists of a 20S core particle (CP) and two 19S regulatory subunits (RP). The regulatory particle is made of a lid composed of 9 subunits, a base containing 6 ATPases including PSMC6 and few additional components. Interacts with PAAF1.

It is found in the cytoplasm. It localises to the nucleus. Component of the 26S proteasome, a multiprotein complex involved in the ATP-dependent degradation of ubiquitinated proteins. This complex plays a key role in the maintenance of protein homeostasis by removing misfolded or damaged proteins, which could impair cellular functions, and by removing proteins whose functions are no longer required. Therefore, the proteasome participates in numerous cellular processes, including cell cycle progression, apoptosis, or DNA damage repair. PSMC6 belongs to the heterohexameric ring of AAA (ATPases associated with diverse cellular activities) proteins that unfolds ubiquitinated target proteins that are concurrently translocated into a proteolytic chamber and degraded into peptides. The sequence is that of 26S proteasome regulatory subunit 10B (PSMC6) from Homo sapiens (Human).